A 748-amino-acid chain; its full sequence is 5-methyltetrahydropteroyltriglutamate--homocysteine methyltransferase (748 aa).

5-methyltetrahydropteroyltri-L-glutamate contacts are provided by residues 18-21 (REWK) and Lys-112. Residues 420 to 422 (IGS) and Glu-473 each bind L-homocysteine. L-methionine is bound by residues 420-422 (IGS) and Glu-473. Trp-550 lines the 5-methyltetrahydropteroyltri-L-glutamate pocket. Asp-588 lines the L-homocysteine pocket. Residue Asp-588 participates in L-methionine binding. Glu-594 serves as a coordination point for 5-methyltetrahydropteroyltri-L-glutamate. Residues His-630, Cys-632, and Glu-654 each coordinate Zn(2+). His-683 functions as the Proton donor in the catalytic mechanism. Cys-715 is a Zn(2+) binding site.

This sequence belongs to the vitamin-B12 independent methionine synthase family. Zn(2+) is required as a cofactor.

The catalysed reaction is 5-methyltetrahydropteroyltri-L-glutamate + L-homocysteine = tetrahydropteroyltri-L-glutamate + L-methionine. Its pathway is amino-acid biosynthesis; L-methionine biosynthesis via de novo pathway; L-methionine from L-homocysteine (MetE route): step 1/1. In terms of biological role, catalyzes the transfer of a methyl group from 5-methyltetrahydrofolate to homocysteine resulting in methionine formation. The protein is 5-methyltetrahydropteroyltriglutamate--homocysteine methyltransferase of Staphylococcus epidermidis (strain ATCC 35984 / DSM 28319 / BCRC 17069 / CCUG 31568 / BM 3577 / RP62A).